Here is a 302-residue protein sequence, read N- to C-terminus: 4-hydroxy-tetrahydrodipicolinate synthase (302 aa).

Pyruvate is bound at residue Thr-44. The Proton donor/acceptor role is filled by Tyr-132. Lys-160 acts as the Schiff-base intermediate with substrate in catalysis. Val-202 contributes to the pyruvate binding site.

Belongs to the DapA family. In terms of assembly, homotetramer; dimer of dimers.

It localises to the cytoplasm. It carries out the reaction L-aspartate 4-semialdehyde + pyruvate = (2S,4S)-4-hydroxy-2,3,4,5-tetrahydrodipicolinate + H2O + H(+). It functions in the pathway amino-acid biosynthesis; L-lysine biosynthesis via DAP pathway; (S)-tetrahydrodipicolinate from L-aspartate: step 3/4. Its function is as follows. Catalyzes the condensation of (S)-aspartate-beta-semialdehyde [(S)-ASA] and pyruvate to 4-hydroxy-tetrahydrodipicolinate (HTPA). This chain is 4-hydroxy-tetrahydrodipicolinate synthase, found in Thermomicrobium roseum (strain ATCC 27502 / DSM 5159 / P-2).